Consider the following 492-residue polypeptide: MSILLKAAGLLFLGMLQAFPKDRPLDTTCTGDLSYYPGEAARNCCYQCPSGLSPTQPCPQGPATARSSVILTTTNEDRKCTACVTCLPGLVEKAPCSGNSPRICECQPGMYCSTPAVNSCARCSEKTVVKFPDTAEKNTICDLPSPGSGPNGSNPDDCKTLTSHTTPQAIPTLESPANDSVRSLLPKQVTDFVNEGATKLVKVPESSSSKASMPSPDPGNAEMNMTLKLPPPGTVPDISTSENSMEPASTASTLSLLVDARTSSRMQPTSPLSTGTPFLDPGSMLFWVAMVVLLVGSASFLLCYWKACRRRFQRKFHLNYLQQTFQPKMEQVDSCPTEKLTQLQRSGSVTDSSAGHTLSPLSPPAVETGASVGTACLETLPLLDDSITGNSFAPREPPEPRVSTEHTNNRIEKIYIMKADTVIVGSVKTEVPEGRAPVGSTESELEAELEVDHTPHYPEQETEPPLGSCTEVMFSVEEGGKEDHEPTTVSEK.

Residues 1-18 form the signal peptide; it reads MSILLKAAGLLFLGMLQA. Topologically, residues 19–282 are extracellular; that stretch reads FPKDRPLDTT…STGTPFLDPG (264 aa). 2 TNFR-Cys repeats span residues 57-104 and 105-141; these read PCPQ…PRIC and ECQP…NTIC. 4 cysteine pairs are disulfide-bonded: cysteine 58–cysteine 80, cysteine 83–cysteine 96, cysteine 86–cysteine 104, and cysteine 123–cysteine 141. Residues 141 to 178 form a disordered region; sequence CDLPSPGSGPNGSNPDDCKTLTSHTTPQAIPTLESPAN. Residues 144-155 show a composition bias toward low complexity; it reads PSPGSGPNGSNP. Residues asparagine 151, asparagine 178, and asparagine 224 are each glycosylated (N-linked (GlcNAc...) asparagine). The span at 160-178 shows a compositional bias: polar residues; the sequence is TLTSHTTPQAIPTLESPAN. The helical transmembrane segment at 283–303 threads the bilayer; the sequence is SMLFWVAMVVLLVGSASFLLC. The Cytoplasmic segment spans residues 304-492; the sequence is YWKACRRRFQ…DHEPTTVSEK (189 aa). Phosphoserine is present on residues serine 334 and serine 348. Disordered stretches follow at residues 336–366 and 432–492; these read PTEK…PPAV and PEGR…VSEK. Positions 339–360 are enriched in polar residues; sequence KLTQLQRSGSVTDSSAGHTLSP. Basic and acidic residues-rich tracts occupy residues 450 to 459 and 478 to 492; these read EVDHTPHYPE and EGGK…VSEK.

This sequence belongs to the TNFR8 family. As to quaternary structure, interacts with TRAF1, TRAF2, TRAF3 and TRAF5. Very low level of expression. Detected in spleen, thymus and lung. Highly expressed in HTLV-1 infected T-cell lines.

It is found in the cell membrane. Receptor for TNFSF8/CD30L. May play a role in the regulation of cellular growth and transformation of activated lymphoblasts. Regulates gene expression through activation of NF-kappa-B. This chain is Tumor necrosis factor receptor superfamily member 8, found in Rattus norvegicus (Rat).